The sequence spans 196 residues: Protein GrpE (196 aa).

A compositionally biased stretch (basic and acidic residues) spans 1–26 (MQEPHNQEPIEEQKLSEMEDTLEKQH). Residues 1-40 (MQEPHNQEPIEEQKLSEMEDTLEKQHSGASTENTERAEEG) form a disordered region.

Belongs to the GrpE family. In terms of assembly, homodimer.

The protein localises to the cytoplasm. Functionally, participates actively in the response to hyperosmotic and heat shock by preventing the aggregation of stress-denatured proteins, in association with DnaK and GrpE. It is the nucleotide exchange factor for DnaK and may function as a thermosensor. Unfolded proteins bind initially to DnaJ; upon interaction with the DnaJ-bound protein, DnaK hydrolyzes its bound ATP, resulting in the formation of a stable complex. GrpE releases ADP from DnaK; ATP binding to DnaK triggers the release of the substrate protein, thus completing the reaction cycle. Several rounds of ATP-dependent interactions between DnaJ, DnaK and GrpE are required for fully efficient folding. The polypeptide is Protein GrpE (Nitrosomonas eutropha (strain DSM 101675 / C91 / Nm57)).